Consider the following 616-residue polypeptide: Replication protein A 70 kDa DNA-binding subunit (616 aa).

An N-acetylmethionine modification is found at methionine 1. Glycyl lysine isopeptide (Lys-Gly) (interchain with G-Cter in ubiquitin) cross-links involve residues lysine 22 and lysine 88. A disordered region spans residues 121–154 (GLGQPQVAPPAPAASPAASSRPQPQNGSSGMGST). The segment covering 134 to 145 (ASPAASSRPQPQ) has biased composition (low complexity). Lysine 163 and lysine 167 each carry N6-acetyllysine; alternate. Residues lysine 163 and lysine 167 each participate in a glycyl lysine isopeptide (Lys-Gly) (interchain with G-Cter in ubiquitin); alternate cross-link. Phosphothreonine is present on threonine 180. Lysine 183 participates in a covalent cross-link: Glycyl lysine isopeptide (Lys-Gly) (interchain with G-Cter in ubiquitin). Threonine 191 bears the Phosphothreonine mark. The OB DNA-binding region spans 197 to 281 (WTICARVTNK…VKNDYEMTFN (85 aa)). Glycyl lysine isopeptide (Lys-Gly) (interchain with G-Cter in ubiquitin) cross-links involve residues lysine 220 and lysine 244. Lysine 259 bears the N6-acetyllysine; alternate mark. Residue lysine 259 forms a Glycyl lysine isopeptide (Lys-Gly) (interchain with G-Cter in ubiquitin); alternate linkage. Residues lysine 267 and lysine 331 each participate in a glycyl lysine isopeptide (Lys-Gly) (interchain with G-Cter in ubiquitin) cross-link. Serine 384 is modified (phosphoserine). Residues lysine 410 and lysine 431 each participate in a glycyl lysine isopeptide (Lys-Gly) (interchain with G-Cter in ubiquitin) cross-link. Lysine 449 is covalently cross-linked (Glycyl lysine isopeptide (Lys-Gly) (interchain with G-Cter in SUMO)). Lysine 458 is covalently cross-linked (Glycyl lysine isopeptide (Lys-Gly) (interchain with G-Cter in ubiquitin)). The C4-type zinc-finger motif lies at 481–503 (CPTQDCNKKVIDQQNGLYRCEKC). Lysine 553 participates in a covalent cross-link: Glycyl lysine isopeptide (Lys-Gly) (interchain with G-Cter in ubiquitin). Residue lysine 577 forms a Glycyl lysine isopeptide (Lys-Gly) (interchain with G-Cter in SUMO) linkage.

Belongs to the replication factor A protein 1 family. Component of the canonical replication protein A complex (RPA), a heterotrimer composed of RPA1, RPA2 and RPA3. Also a component of the aRPA, the alternative replication protein A complex, a trimeric complex similar to the replication protein A complex/RPA but where RPA1 and RPA3 are associated with RPA4 instead of RPA2. The DNA-binding activity may reside exclusively on the RPA1 subunit. Interacts with PRPF19; the PRP19-CDC5L complex is recruited to the sites of DNA repair where it ubiquitinates the replication protein A complex (RPA). Interacts with RIPK1. Interacts with the polymerase alpha subunit POLA1/p180; this interaction stabilizes the replicative complex and reduces the misincorporation rate of DNA polymerase alpha by acting as a fidelity clamp. Interacts with RAD51 and SENP6 to regulate DNA repair. Interacts with HELB; this interaction promotes HELB recruitment to chromatin following DNA damage. Interacts with PRIMPOL; leading to recruit PRIMPOL on chromatin and stimulate its DNA primase activity. Interacts with XPA; the interaction is direct and associates XPA with the RPA complex. Interacts with ETAA1; the interaction is direct and promotes ETAA1 recruitment at stalled replication forks. Interacts with RPA1; this interaction associates HROB with the RPA complex. Interacts (when poly-ADP-ribosylated) with HTATSF1. Interacts with BRIP1/FANCJ via this RPA1 subunit; following DNA damage they colocalize in foci in the nucleus. DNA damage-induced 'Lys-63'-linked polyubiquitination by PRPF19 mediates ATRIP recruitment to the RPA complex at sites of DNA damage and activation of ATR. Ubiquitinated by RFWD3 at stalled replication forks in response to DNA damage: ubiquitination by RFWD3 does not lead to degradation by the proteasome and promotes removal of the RPA complex from stalled replication forks, promoting homologous recombination. In terms of processing, sumoylated on lysine residues Lys-449 and Lys-577, with Lys-449 being the major site. Sumoylation promotes recruitment of RAD51 to the DNA damage foci to initiate DNA repair through homologous recombination. Desumoylated by SENP6. Post-translationally, poly-ADP-ribosylated by PARP1; promoting recruitment of HTATSF1.

The protein resides in the nucleus. It localises to the PML body. Functionally, as part of the heterotrimeric replication protein A complex (RPA/RP-A), binds and stabilizes single-stranded DNA intermediates that form during DNA replication or upon DNA stress. It prevents their reannealing and in parallel, recruits and activates different proteins and complexes involved in DNA metabolism. Thereby, it plays an essential role both in DNA replication and the cellular response to DNA damage. In the cellular response to DNA damage, the RPA complex controls DNA repair and DNA damage checkpoint activation. Through recruitment of ATRIP activates the ATR kinase a master regulator of the DNA damage response. It is required for the recruitment of the DNA double-strand break repair factors RAD51 and RAD52 to chromatin in response to DNA damage. Also recruits to sites of DNA damage proteins like XPA and XPG that are involved in nucleotide excision repair and is required for this mechanism of DNA repair. Also plays a role in base excision repair (BER) probably through interaction with UNG. Also recruits SMARCAL1/HARP, which is involved in replication fork restart, to sites of DNA damage. Plays a role in telomere maintenance. As part of the alternative replication protein A complex, aRPA, binds single-stranded DNA and probably plays a role in DNA repair. Compared to the RPA2-containing, canonical RPA complex, may not support chromosomal DNA replication and cell cycle progression through S-phase. The aRPA may not promote efficient priming by DNA polymerase alpha but could support DNA synthesis by polymerase delta in presence of PCNA and replication factor C (RFC), the dual incision/excision reaction of nucleotide excision repair and RAD51-dependent strand exchange. RPA stimulates 5'-3' helicase activity of the BRIP1/FANCJ. In Homo sapiens (Human), this protein is Replication protein A 70 kDa DNA-binding subunit (RPA1).